Reading from the N-terminus, the 576-residue chain is uncharacterized protein (576 aa).

Residues 41 to 78 form a disordered region; sequence EKESESKLNSKSTTLQSSDSEDWDSEENEDDITDVGVP. The segment covering 49 to 58 has biased composition (low complexity); sequence NSKSTTLQSS. A compositionally biased stretch (acidic residues) spans 59–73; that stretch reads DSEDWDSEENEDDIT. WD repeat units lie at residues 87 to 126, 195 to 235, 248 to 288, 296 to 335, and 393 to 433; these read GHSK…ATNP, GHIA…SQLE, LSRI…KRPV, LPQQ…KCVN, and TVTA…RGVK. Residues 547–576 are disordered; sequence SETQPTPIYQGVTEGDISSEEGNPSKKQKR.

This is an uncharacterized protein from Schizosaccharomyces pombe (strain 972 / ATCC 24843) (Fission yeast).